The following is a 241-amino-acid chain: N-acetylmuramoyl-L-alanine amidase Rv3717 (241 aa).

An N-terminal signal peptide occupies residues 1 to 24; it reads MIVGVLVAAATPIISSASATPANI. In terms of domain architecture, MurNAc-LAA spans 29–230; sequence VFIDPGHNGA…KYANALVRGV (202 aa). Zn(2+) is bound at residue histidine 35. Residues 45–69 are disordered; sequence RQVPTGRGGTKNCQASGTSTNSGYP. Over residues 55 to 67 the composition is skewed to polar residues; the sequence is KNCQASGTSTNSG. Cysteines 57 and 105 form a disulfide. Residues glutamate 70 and histidine 125 each contribute to the Zn(2+) site. Glutamate 200 functions as the Proton donor/acceptor in the catalytic mechanism.

It belongs to the N-acetylmuramoyl-L-alanine amidase 3 family. Monomer. Requires Zn(2+) as cofactor.

Its subcellular location is the periplasm. It carries out the reaction Hydrolyzes the link between N-acetylmuramoyl residues and L-amino acid residues in certain cell-wall glycopeptides.. Its pathway is cell wall degradation; peptidoglycan degradation. Its activity is regulated as follows. The structure reveals a short flexible hairpin turn that partially occludes the active site and may be involved in autoregulation. Functionally, cell-wall hydrolase that hydrolyzes the amide bond between N-acetylmuramic acid and L-alanine in cell-wall glycopeptides. Is able to hydrolyze the cell walls of several bacterial species (i.e. Paenibacillus sp., B.avium, E.coli DH5alpha, E.aerogenes, L.acidophilus, B.thuringiensis, B.pumilus, B.subtilis and E.coli W3110), thereby showing that it is a cell-wall hydrolase with broad-spectrum activity. May have a role in peptidoglycan fragment recycling. This Mycobacterium tuberculosis (strain ATCC 25618 / H37Rv) protein is N-acetylmuramoyl-L-alanine amidase Rv3717.